The sequence spans 217 residues: Octanoyltransferase (217 aa).

The region spanning Gly-30–Pro-209 is the BPL/LPL catalytic domain. Substrate-binding positions include Arg-75–His-82, Ala-139–Gly-141, and Gly-152–Ala-154. Cys-170 (acyl-thioester intermediate) is an active-site residue.

Belongs to the LipB family.

The protein resides in the cytoplasm. The enzyme catalyses octanoyl-[ACP] + L-lysyl-[protein] = N(6)-octanoyl-L-lysyl-[protein] + holo-[ACP] + H(+). The protein operates within protein modification; protein lipoylation via endogenous pathway; protein N(6)-(lipoyl)lysine from octanoyl-[acyl-carrier-protein]: step 1/2. Its function is as follows. Catalyzes the transfer of endogenously produced octanoic acid from octanoyl-acyl-carrier-protein onto the lipoyl domains of lipoate-dependent enzymes. Lipoyl-ACP can also act as a substrate although octanoyl-ACP is likely to be the physiological substrate. This chain is Octanoyltransferase, found in Thermus thermophilus (strain ATCC 27634 / DSM 579 / HB8).